Reading from the N-terminus, the 90-residue chain is Large ribosomal subunit protein eL31 (90 aa).

It belongs to the eukaryotic ribosomal protein eL31 family.

This is Large ribosomal subunit protein eL31 from Natronomonas pharaonis (strain ATCC 35678 / DSM 2160 / CIP 103997 / JCM 8858 / NBRC 14720 / NCIMB 2260 / Gabara) (Halobacterium pharaonis).